The chain runs to 340 residues: uncharacterized protein (340 aa).

A run of 2 helical transmembrane segments spans residues 162 to 182 (PLVP…VLAG) and 239 to 259 (FWIS…IVVP).

It is found in the cell membrane. This is an uncharacterized protein from Mycobacterium bovis (strain ATCC BAA-935 / AF2122/97).